A 107-amino-acid polypeptide reads, in one-letter code: Cell division protein FtsB (107 aa).

The Cytoplasmic segment spans residues 1-3 (MGK). Residues 4 to 21 (LTLLLLILLGWLQYSLWL) form a helical membrane-spanning segment. Topologically, residues 22–107 (GKNGVHDFVR…IPSTQNNAQQ (86 aa)) are periplasmic. Positions 39-62 (QEVNNGKLKARNDQLFAEIDDLNG) form a coiled coil.

This sequence belongs to the FtsB family. In terms of assembly, part of a complex composed of FtsB, FtsL and FtsQ.

The protein resides in the cell inner membrane. Essential cell division protein. May link together the upstream cell division proteins, which are predominantly cytoplasmic, with the downstream cell division proteins, which are predominantly periplasmic. The sequence is that of Cell division protein FtsB from Yersinia enterocolitica serotype O:8 / biotype 1B (strain NCTC 13174 / 8081).